Here is a 285-residue protein sequence, read N- to C-terminus: Kanamycin B dioxygenase (285 aa).

The protein belongs to the PhyH family. It depends on Fe cation as a cofactor.

The enzyme catalyses kanamycin B + 2-oxoglutarate + O2 = 2'-dehydrokanamycin A + succinate + NH4(+) + CO2. The protein operates within antibiotic biosynthesis; kanamycin biosynthesis. Its function is as follows. Mediates the conversion of kanamycin B into 2'-dehydrokanamycin A during the transformation of kanamycin B to kanamycin A. This chain is Kanamycin B dioxygenase (kanJ), found in Streptomyces kanamyceticus.